Reading from the N-terminus, the 202-residue chain is Dephospho-CoA kinase (202 aa).

The region spanning 6–202 is the DPCK domain; it reads KVSITGDLSS…EYFYALKGAL (197 aa). 14-19 lines the ATP pocket; the sequence is SSGKTE.

It belongs to the CoaE family.

Its subcellular location is the cytoplasm. It carries out the reaction 3'-dephospho-CoA + ATP = ADP + CoA + H(+). It functions in the pathway cofactor biosynthesis; coenzyme A biosynthesis; CoA from (R)-pantothenate: step 5/5. Its function is as follows. Catalyzes the phosphorylation of the 3'-hydroxyl group of dephosphocoenzyme A to form coenzyme A. The protein is Dephospho-CoA kinase of Chlamydia pneumoniae (Chlamydophila pneumoniae).